We begin with the raw amino-acid sequence, 395 residues long: ATP phosphoribosyltransferase regulatory subunit (395 aa).

It belongs to the class-II aminoacyl-tRNA synthetase family. HisZ subfamily. Heteromultimer composed of HisG and HisZ subunits.

The protein resides in the cytoplasm. The protein operates within amino-acid biosynthesis; L-histidine biosynthesis; L-histidine from 5-phospho-alpha-D-ribose 1-diphosphate: step 1/9. In terms of biological role, required for the first step of histidine biosynthesis. May allow the feedback regulation of ATP phosphoribosyltransferase activity by histidine. The protein is ATP phosphoribosyltransferase regulatory subunit of Pseudomonas fluorescens (strain Pf0-1).